Reading from the N-terminus, the 591-residue chain is 5'-nucleotidase domain-containing protein DDB_G0275467 (591 aa).

Low complexity-rich tracts occupy residues 38–50 (STTTTSGIKSYST) and 68–78 (QHQQQQPQQHQ). Residues 38–88 (STTTTSGIKSYSTHNRSNNDTHTSKSNTIDQHQQQQPQQHQNNDNKHLFTP) form a disordered region. The active-site Nucleophile is the Asp-165. Asp-165 and Asp-167 together coordinate Mg(2+). Residue Asp-167 is the Proton donor of the active site. 305–313 (TAAVGKVHL) is a substrate binding site. Asp-450 is a binding site for Mg(2+).

The protein belongs to the 5'(3')-deoxyribonucleotidase family. Requires Mg(2+) as cofactor.

The sequence is that of 5'-nucleotidase domain-containing protein DDB_G0275467 from Dictyostelium discoideum (Social amoeba).